Reading from the N-terminus, the 141-residue chain is Myosin regulatory light chain cdc4 (141 aa).

Phosphoserine occurs at positions 2 and 6. 3 EF-hand domains span residues 3-38 (TDDS…CGQN), 74-109 (GDPE…LGEK), and 109-141 (KLSN…ILAN). Residues aspartate 87, aspartate 89, threonine 91, methionine 93, and glutamate 98 each contribute to the Ca(2+) site.

As to quaternary structure, binds to myosin II chains myo2 and myo3. Interacts with vps27 and a PI 4-kinase pik1. Post-translationally, phosphorylated on either Ser-2 or Ser-6 but not both. Phosphorylation is not essential for the function of the protein.

It localises to the cytoplasm. Involved in cytokinesis. Required for the formation and function of the contractile ring. The chain is Myosin regulatory light chain cdc4 (cdc4) from Schizosaccharomyces pombe (strain 972 / ATCC 24843) (Fission yeast).